Here is a 967-residue protein sequence, read N- to C-terminus: Zinc finger protein with KRAB and SCAN domains 2 (967 aa).

Residue Lys22 forms a Glycyl lysine isopeptide (Lys-Gly) (interchain with G-Cter in SUMO2) linkage. Residues 45 to 127 enclose the SCAN box domain; that stretch reads RKCFRQFCYE…ALVVHLEKET (83 aa). Residues 150 to 205 are disordered; sequence WEVADFQPEQVETQPRAVSREEPGSLHSGHQEQLNRKRERRPLPKNARPSPWVPAL. Basic and acidic residues predominate over residues 167–185; it reads VSREEPGSLHSGHQEQLNR. The 72-residue stretch at 229–300 folds into the KRAB domain; sequence VKDVHVARGF…GLHSSNKRSI (72 aa). Glycyl lysine isopeptide (Lys-Gly) (interchain with G-Cter in SUMO2) cross-links involve residues Lys242, Lys259, Lys277, Lys337, Lys482, and Lys529. Positions 586-602 are enriched in low complexity; it reads RASAPSPSTPEEVPSPS. A disordered region spans residues 586–626; the sequence is RASAPSPSTPEEVPSPSRQERGGIEVEPQEPTGWEPEETSQ. Phosphoserine is present on residues Ser591 and Ser600. Glycyl lysine isopeptide (Lys-Gly) (interchain with G-Cter in SUMO2) cross-links involve residues Lys734, Lys745, and Lys752. 6 consecutive C2H2-type zinc fingers follow at residues 775-797, 803-825, 831-853, 859-881, 887-909, and 915-937; these read YKCG…QRIH, FKCL…QRIH, YRCG…QRTH, YQCG…RRVH, YKCV…RRIH, and YGCA…REVH. A disordered region spans residues 941–967; it reads KPLPHPPSLYCPENPHKGKTDEFRKTF. The segment covering 954-967 has biased composition (basic and acidic residues); it reads NPHKGKTDEFRKTF.

Belongs to the krueppel C2H2-type zinc-finger protein family.

The protein resides in the nucleus. In terms of biological role, may be involved in transcriptional regulation. This is Zinc finger protein with KRAB and SCAN domains 2 (ZKSCAN2) from Homo sapiens (Human).